Consider the following 176-residue polypeptide: Inner membrane-spanning protein YciB (176 aa).

The next 6 helical transmembrane spans lie at 3–23 (FLFD…WGIF), 24–44 (TATA…AFRH), 49–69 (TMLW…LVLH), 72–92 (KFIQ…LLAA), 121–141 (VAWA…VHNF), and 149–169 (FKLF…SLWL).

Belongs to the YciB family.

It localises to the cell inner membrane. Functionally, plays a role in cell envelope biogenesis, maintenance of cell envelope integrity and membrane homeostasis. The chain is Inner membrane-spanning protein YciB from Burkholderia orbicola (strain MC0-3).